The primary structure comprises 456 residues: Bifunctional protein GlmU (456 aa).

The interval 1 to 230 is pyrophosphorylase; it reads MDKRFAVVLA…FQETLGVNDR (230 aa). Residues 9–12, lysine 23, glutamine 73, and 78–79 contribute to the UDP-N-acetyl-alpha-D-glucosamine site; these read LAAG and GT. Residue aspartate 103 participates in Mg(2+) binding. 4 residues coordinate UDP-N-acetyl-alpha-D-glucosamine: glycine 140, glutamate 155, asparagine 170, and asparagine 228. Asparagine 228 lines the Mg(2+) pocket. The linker stretch occupies residues 231-251; sequence VALSQAEIYMKQRINKRHMQN. The tract at residues 252–456 is N-acetyltransferase; that stretch reads GVSLIDPDNT…EDYAENIHKK (205 aa). The UDP-N-acetyl-alpha-D-glucosamine site is built by arginine 333 and lysine 351. The Proton acceptor role is filled by histidine 363. Tyrosine 366 and asparagine 377 together coordinate UDP-N-acetyl-alpha-D-glucosamine. Residues 386–387, alanine 423, and arginine 440 each bind acetyl-CoA; that span reads NY.

In the N-terminal section; belongs to the N-acetylglucosamine-1-phosphate uridyltransferase family. The protein in the C-terminal section; belongs to the transferase hexapeptide repeat family. As to quaternary structure, homotrimer. Mg(2+) serves as cofactor.

Its subcellular location is the cytoplasm. It catalyses the reaction alpha-D-glucosamine 1-phosphate + acetyl-CoA = N-acetyl-alpha-D-glucosamine 1-phosphate + CoA + H(+). It carries out the reaction N-acetyl-alpha-D-glucosamine 1-phosphate + UTP + H(+) = UDP-N-acetyl-alpha-D-glucosamine + diphosphate. The protein operates within nucleotide-sugar biosynthesis; UDP-N-acetyl-alpha-D-glucosamine biosynthesis; N-acetyl-alpha-D-glucosamine 1-phosphate from alpha-D-glucosamine 6-phosphate (route II): step 2/2. It participates in nucleotide-sugar biosynthesis; UDP-N-acetyl-alpha-D-glucosamine biosynthesis; UDP-N-acetyl-alpha-D-glucosamine from N-acetyl-alpha-D-glucosamine 1-phosphate: step 1/1. Its pathway is bacterial outer membrane biogenesis; LPS lipid A biosynthesis. In terms of biological role, catalyzes the last two sequential reactions in the de novo biosynthetic pathway for UDP-N-acetylglucosamine (UDP-GlcNAc). The C-terminal domain catalyzes the transfer of acetyl group from acetyl coenzyme A to glucosamine-1-phosphate (GlcN-1-P) to produce N-acetylglucosamine-1-phosphate (GlcNAc-1-P), which is converted into UDP-GlcNAc by the transfer of uridine 5-monophosphate (from uridine 5-triphosphate), a reaction catalyzed by the N-terminal domain. This is Bifunctional protein GlmU from Bacillus licheniformis (strain ATCC 14580 / DSM 13 / JCM 2505 / CCUG 7422 / NBRC 12200 / NCIMB 9375 / NCTC 10341 / NRRL NRS-1264 / Gibson 46).